The chain runs to 688 residues: Collagen alpha-2(IX) chain (688 aa).

A signal peptide spans 1 to 22 (MAPAADPRSLLVLLQVLGLALA). A triple-helical region 4 (COL4) region spans residues 26-162 (GLPGEPGPPG…PGKPGRPGTI (137 aa)). 3 disordered regions span residues 26 to 520 (GLPG…RDAS), 549 to 578 (GATGMMGPPGPPGPPGYPGKQGPHGHPGPR), and 590 to 662 (IGNT…LPGF). 2 stretches are compositionally biased toward pro residues: residues 30 to 42 (EPGPPGPPGPPGV) and 105 to 126 (LPGPPGLPGPGFAGPPGPPGPV). Over residues 128-138 (LPGEIGLTGPK) the composition is skewed to low complexity. Positions 143–156 (PEGPSGPPGPPGKP) are enriched in pro residues. Pro-159 bears the 4-hydroxyproline mark. The interval 163–179 (QGLEGSADFLCPTNCPA) is nonhelical region 4 (NC4). O-linked (Xyl...) (glycosaminoglycan) serine glycosylation occurs at Ser-168. The triple-helical region 3 (COL3) stretch occupies residues 180–518 (GVKGPPGLQG…PGRQGVAGRD (339 aa)). Lys-182 is subject to 5-hydroxylysine. Residue Lys-182 is glycosylated (O-linked (Gal...) hydroxylysine). 2 stretches are compositionally biased toward low complexity: residues 251–265 (KGMVGSVGAAGSPGE) and 394–412 (PVGQPGPQGRQGPKGEQGP). The span at 435–444 (GPRGGVGDPG) shows a compositional bias: gly residues. Residues 497–506 (RGLVGDRGLP) are compositionally biased toward low complexity. Positions 519–548 (ASDQHIEDVVLKMLQEQLAEMAVSAKREAL) are nonhelical region 3 (NC3). Positions 549–631 (GATGMMGPPG…PGLPGRPGQA (83 aa)) are triple-helical region 2 (COL2). The span at 556 to 565 (PPGPPGPPGY) shows a compositional bias: pro residues. The span at 598 to 610 (KRGEKGDQGEVGR) shows a compositional bias: basic and acidic residues. The segment at 632-633 (IN) is nonhelical region 2 (NC2). The triple-helical region 1 (COL1) stretch occupies residues 634-663 (GKDGDRGAPGAPGEAGRPGLPGPIGLPGFC). Residues 641–651 (APGAPGEAGRP) show a composition bias toward low complexity. The segment at 664 to 688 (EPAACLGASAYASGRLTEPGSIKGP) is nonhelical region 1 (NC1).

This sequence belongs to the fibril-associated collagens with interrupted helices (FACIT) family. In terms of assembly, heterotrimer of an alpha 1(IX), an alpha 2(IX) and an alpha 3(IX) chain. The chains are linked to each other by interchain disulfide bonds. Trimers are also cross-linked via hydroxylysines. In terms of processing, prolines at the third position of the tripeptide repeating unit (G-X-Y) are hydroxylated in some or all of the chains. Covalently linked to the telopeptides of type II collagen by hydroxylysine-derived cross-links.

The protein localises to the secreted. It localises to the extracellular space. The protein resides in the extracellular matrix. In terms of biological role, structural component of hyaline cartilage and vitreous of the eye. This chain is Collagen alpha-2(IX) chain, found in Bos taurus (Bovine).